A 150-amino-acid chain; its full sequence is Large ribosomal subunit protein uL15 (150 aa).

Residues Met1–Asn15 show a composition bias toward polar residues. Residues Met1–Gly53 form a disordered region. A compositionally biased stretch (gly residues) spans Gly23–Ala32.

This sequence belongs to the universal ribosomal protein uL15 family. As to quaternary structure, part of the 50S ribosomal subunit.

In terms of biological role, binds to the 23S rRNA. This is Large ribosomal subunit protein uL15 from Flavobacterium johnsoniae (strain ATCC 17061 / DSM 2064 / JCM 8514 / BCRC 14874 / CCUG 350202 / NBRC 14942 / NCIMB 11054 / UW101) (Cytophaga johnsonae).